The sequence spans 301 residues: MALVVICGQPCSGKSAAAACLAAALCSSTSDLTVRIIDESSLHLGRNDSYKDMVVEKNLRGVLRSEVDRSVSRDSIIVVDSLNNIKGYRYELWCLARASGIRYCVLFCDTEVDHCREWNTKRQEKGEPTYDNNIFDDLVSRFEKPDRRNRWDSPLFELFPSRDGVMESSPVIAEAVSYLTKKVDSKTRDVKVLQPTIATQTARTTEANSLYEMDKATQEVINAIVEAQSCGLGLPVNKISLGPDLPTICLQRSVGLPELRSLRRTFIKLAGQYSLSGPPPPADADSATRMFVDYLNREISS.

Residue 8-15 (GQPCSGKS) coordinates ATP. The tract at residues 262 to 275 (LRRTFIKLAGQYSL) is calmodulin-binding.

This sequence belongs to the KTI12 family. Interacts with the elongator complex. Binds to calmodulin in a calcium-dependent manner.

The protein resides in the cytoplasm. Its subcellular location is the nucleus. Its function is as follows. Elongator complex-associated factor that is not a structural subunit but rather transiently contacts the complex. Regulates both meristem activity and organ growth; acts as a positive regulator of adaxial leaf patterning. Required for an early step in synthesis of 5-carbamoylmethyl (ncm5) groups present on uridines (ncm5U) at the wobble position in tRNA. The polypeptide is Protein KTI12 homolog (Oryza sativa subsp. indica (Rice)).